Reading from the N-terminus, the 249-residue chain is Ribosomal RNA small subunit methyltransferase G (249 aa).

3 residues coordinate S-adenosyl-L-methionine: glycine 86, phenylalanine 91, and arginine 178.

It belongs to the methyltransferase superfamily. RNA methyltransferase RsmG family.

Its subcellular location is the cytoplasm. Its function is as follows. Specifically methylates the N7 position of a guanine in 16S rRNA. This is Ribosomal RNA small subunit methyltransferase G from Bifidobacterium adolescentis (strain ATCC 15703 / DSM 20083 / NCTC 11814 / E194a).